A 301-amino-acid chain; its full sequence is GTPase Era (301 aa).

The Era-type G domain occupies 6-173 (KSGFVAIVGR…LEQTNANLEI (168 aa)). A G1 region spans residues 14 to 21 (GRPNVGKS). Residue 14–21 (GRPNVGKS) coordinates GTP. Residues 40-44 (QTTRN) form a G2 region. The segment at 61–64 (DTPG) is G3. GTP is bound by residues 61–65 (DTPGI) and 123–126 (NKID). The interval 123–126 (NKID) is G4. The segment at 152 to 154 (ISA) is G5. A KH type-2 domain is found at 204–282 (TREEVPHSVA…FLEVWVKVQK (79 aa)).

The protein belongs to the TRAFAC class TrmE-Era-EngA-EngB-Septin-like GTPase superfamily. Era GTPase family. As to quaternary structure, monomer.

The protein resides in the cytoplasm. The protein localises to the cell membrane. Functionally, an essential GTPase that binds both GDP and GTP, with rapid nucleotide exchange. Plays a role in 16S rRNA processing and 30S ribosomal subunit biogenesis and possibly also in cell cycle regulation and energy metabolism. In Listeria monocytogenes serotype 4a (strain HCC23), this protein is GTPase Era.